A 186-amino-acid chain; its full sequence is Ribosome-recycling factor (186 aa).

Belongs to the RRF family.

The protein localises to the cytoplasm. In terms of biological role, responsible for the release of ribosomes from messenger RNA at the termination of protein biosynthesis. May increase the efficiency of translation by recycling ribosomes from one round of translation to another. This Nitratidesulfovibrio vulgaris (strain DP4) (Desulfovibrio vulgaris) protein is Ribosome-recycling factor.